The chain runs to 88 residues: Outer membrane protein H.8 (88 aa).

The first 17 residues, 1 to 17 (MKKSLFAAALLSLALAA), serve as a signal peptide directing secretion. Residue C18 is the site of N-palmitoyl cysteine attachment. Residue C18 is the site of S-diacylglycerol cysteine attachment. 13 repeat units span residues 23–27 (AAEAP), 28–32 (AAEAS), 33–37 (STEAP), 38–42 (AAEAP), 43–47 (AAEAP), 48–52 (AAEAA), 53–57 (AAEAP), 58–62 (AAEAP), 63–67 (AAEAP), 68–72 (AAEAA), 73–77 (ATEAP), 78–82 (AAEAP), and 83–87 (AAEAA). Residues 23-87 (AAEAPAAEAS…AAEAPAAEAA (65 aa)) are 13 X 5 AA tandem repeats of [AS]-[AT]-E-A-[PAS]. The disordered stretch occupies residues 23–88 (AAEAPAAEAS…AEAPAAEAAK (66 aa)). Low complexity predominate over residues 25–88 (EAPAAEASST…AEAPAAEAAK (64 aa)).

The protein resides in the cell outer membrane. In Neisseria gonorrhoeae (strain ATCC 700825 / FA 1090), this protein is Outer membrane protein H.8.